The primary structure comprises 604 residues: Putative JmjC domain-containing protein L887 (604 aa).

Positions 1–127 (MNNMKKIIII…PNNKLNLIQP (127 aa)) constitute a JmjC domain. The helical transmembrane segment at 4–24 (MKKIIIISIIIIIIIVLLFYI) threads the bilayer.

It localises to the membrane. In Acanthamoeba polyphaga (Amoeba), this protein is Putative JmjC domain-containing protein L887.